The following is a 92-amino-acid chain: Acylphosphatase (92 aa).

Cys5 and Cys49 form a disulfide bridge. Residues Cys5 to Arg92 enclose the Acylphosphatase-like domain. Residues Arg20 and Asn38 contribute to the active site.

The protein belongs to the acylphosphatase family.

It carries out the reaction an acyl phosphate + H2O = a carboxylate + phosphate + H(+). The chain is Acylphosphatase from Escherichia coli O1:K1 / APEC.